The sequence spans 490 residues: Adenylosuccinate synthetase 1, chloroplastic (490 aa).

A chloroplast-targeting transit peptide spans 1-47 (MSLSTLSHPAAAAAAATGSGKSHFRTAPAAQSVRFPKARPPVPAAVS). The interval 14-36 (AAATGSGKSHFRTAPAAQSVRFP) is disordered. Residues 77-83 (GDEGKGK) and 105-107 (GHT) each bind GTP. D78 acts as the Proton acceptor in catalysis. 2 residues coordinate Mg(2+): D78 and G105. Residues 78-81 (DEGK), 103-106 (NAGH), T195, R209, Q289, T304, and R368 contribute to the IMP site. H106 (proton donor) is an active-site residue. 364-370 (TTTGRPR) is a binding site for substrate. Residues R370, 396–398 (KLD), and 479–481 (GVG) contribute to the GTP site.

The protein belongs to the adenylosuccinate synthetase family. Homodimer. It depends on Mg(2+) as a cofactor.

The protein resides in the plastid. Its subcellular location is the chloroplast. It carries out the reaction IMP + L-aspartate + GTP = N(6)-(1,2-dicarboxyethyl)-AMP + GDP + phosphate + 2 H(+). The protein operates within purine metabolism; AMP biosynthesis via de novo pathway; AMP from IMP: step 1/2. Its function is as follows. Plays an important role in the de novo pathway and in the salvage pathway of purine nucleotide biosynthesis. Catalyzes the first committed step in the biosynthesis of AMP from IMP. This is Adenylosuccinate synthetase 1, chloroplastic from Sorghum bicolor (Sorghum).